We begin with the raw amino-acid sequence, 74 residues long: UPF0741 protein BcerKBAB4_5177 (74 aa).

It belongs to the UPF0741 family.

In Bacillus mycoides (strain KBAB4) (Bacillus weihenstephanensis), this protein is UPF0741 protein BcerKBAB4_5177.